A 446-amino-acid chain; its full sequence is tRNA-2-methylthio-N(6)-dimethylallyladenosine synthase (446 aa).

An MTTase N-terminal domain is found at 3–120 (QKLFIKTYGC…LPEMVNSVAH (118 aa)). The [4Fe-4S] cluster site is built by Cys-12, Cys-49, Cys-83, Cys-157, Cys-161, and Cys-164. The Radical SAM core domain maps to 143–375 (SSEGASAFVS…QQRILQFAQD (233 aa)). Residues 378–442 (RKMVGSTQRI…PNSLRGERVD (65 aa)) form the TRAM domain.

It belongs to the methylthiotransferase family. MiaB subfamily. As to quaternary structure, monomer. [4Fe-4S] cluster serves as cofactor.

It is found in the cytoplasm. It catalyses the reaction N(6)-dimethylallyladenosine(37) in tRNA + (sulfur carrier)-SH + AH2 + 2 S-adenosyl-L-methionine = 2-methylsulfanyl-N(6)-dimethylallyladenosine(37) in tRNA + (sulfur carrier)-H + 5'-deoxyadenosine + L-methionine + A + S-adenosyl-L-homocysteine + 2 H(+). In terms of biological role, catalyzes the methylthiolation of N6-(dimethylallyl)adenosine (i(6)A), leading to the formation of 2-methylthio-N6-(dimethylallyl)adenosine (ms(2)i(6)A) at position 37 in tRNAs that read codons beginning with uridine. The sequence is that of tRNA-2-methylthio-N(6)-dimethylallyladenosine synthase from Hahella chejuensis (strain KCTC 2396).